The sequence spans 512 residues: Cytochrome P450 98A1 (512 aa).

Residues 3-23 (ASLLLSVALAVVLIPLSLALL) traverse the membrane as a helical segment. Position 441 (cysteine 441) interacts with heme.

It belongs to the cytochrome P450 family. The cofactor is heme.

Its subcellular location is the membrane. The sequence is that of Cytochrome P450 98A1 (CYP98A1) from Sorghum bicolor (Sorghum).